An 85-amino-acid polypeptide reads, in one-letter code: Small ribosomal subunit protein bS16 (85 aa).

Belongs to the bacterial ribosomal protein bS16 family.

This Neorickettsia sennetsu (strain ATCC VR-367 / Miyayama) (Ehrlichia sennetsu) protein is Small ribosomal subunit protein bS16.